We begin with the raw amino-acid sequence, 249 residues long: MFGLKAKSTKKVLGSIPKHIGIIMDGNGRWAKKRLKPRVFGHKAGMDALQEVTITASELGVKVLTVYAFSTENWSRPQDEVSFIMNLPVAFFDKYVPVLHENNVKIQMIGETSRLPEDTLAALNAAIDKTKRNTGLILNFALNYGGRAEITSAVRFIAQDVLDAKLNPGDITEDLIANYLMTDHLPYLYRDPDLIIRTSGELRLSNFLPWQSAYSEFYFTPVLWPDFKKAELLKAIADYNRRQRRFGKV.

Asp-25 is an active-site residue. Mg(2+) is bound at residue Asp-25. Substrate contacts are provided by residues 26–29, Trp-30, Arg-38, His-42, and 70–72; these read GNGR and STE. The Proton acceptor role is filled by Asn-73. Residues Trp-74, Arg-76, Arg-197, and 203–205 contribute to the substrate site; that span reads RLS. Glu-216 is a binding site for Mg(2+).

This sequence belongs to the UPP synthase family. As to quaternary structure, homodimer. Mg(2+) serves as cofactor.

Its function is as follows. Catalyzes the condensation of isopentenyl diphosphate (IPP) with allylic pyrophosphates generating different type of terpenoids. The polypeptide is Isoprenyl transferase (Streptococcus pyogenes serotype M6 (strain ATCC BAA-946 / MGAS10394)).